Consider the following 692-residue polypeptide: Epithelial sodium channel subunit alpha (692 aa).

The tract at residues 1–67 is disordered; the sequence is MSSIKGNKLE…PAAPQQPTAE (67 aa). Residues 1–108 lie on the Cytoplasmic side of the membrane; the sequence is MSSIKGNKLE…CSQHNRMKTA (108 aa). Residues 56 to 65 show a composition bias toward low complexity; it reads PEPAAPQQPT. The helical transmembrane segment at 109–129 threads the bilayer; the sequence is FWAVLWLCTFGMMYWQFGLLF. Topologically, residues 130–585 are extracellular; it reads GEYFSYPVSL…SQWSLWFGSS (456 aa). 10 cysteine pairs are disulfide-bonded: cysteine 156–cysteine 328, cysteine 252–cysteine 259, cysteine 305–cysteine 312, cysteine 417–cysteine 502, cysteine 439–cysteine 479, cysteine 439–cysteine 498, cysteine 443–cysteine 494, cysteine 452–cysteine 479, cysteine 452–cysteine 502, and cysteine 454–cysteine 468. The segment at 198 to 266 is gating release of inhibition by proteolysis (GRIP); protease-sensitive region that is responsible for the proteolytic activation of the channel; the sequence is RSRRDLRGTL…SDCFYQTYSS (69 aa). Residues 586-606 traverse the membrane as a helical segment; it reads VLSVVEMAELIFDLLVITFLM. The Cytoplasmic portion of the chain corresponds to 607–692; the sequence is LLRRFRSRYW…GSSACPLGGP (86 aa). Positions 627-692 are disordered; the sequence is EVASTLASSP…GSSACPLGGP (66 aa). A compositionally biased stretch (polar residues) spans 628–637; sequence VASTLASSPP. A compositionally biased stretch (pro residues) spans 653-666; the sequence is GPAPSPALTAPPPA. Positions 663-667 match the PY motif; recruits WW domain-containing proteins and is thereby required for ubiquitination and inhibition of the channel by NEDD4 and NEDD4L motif; that stretch reads PPPAY. Residues 682 to 692 show a composition bias toward low complexity; that stretch reads AGSSACPLGGP.

The protein belongs to the amiloride-sensitive sodium channel (TC 1.A.6) family. SCNN1A subfamily. In terms of assembly, heterotrimer; containing an alpha/SCNN1A, a beta/SCNN1B and a gamma/SCNN1G subunit. Interacts with WWP1 (via WW domains). Interacts with WWP2 (via WW domains); inhibits the channel. Interacts with BPIFA1; the interaction is indirect via SCNN1B and inhibits the proteolytic processing of SCNN1A and SCNN1G and the activation of ENaC. Interacts with the full-length immature form of PCSK9 (pro-PCSK9). Ubiquitinated. Can be ubiquitinated at multiple sites and undergo monoubiquitination and polyubiquitination. Ubiquitination by NEDD4 or NEDD4L inhibits the ENaC channel through endocytosis, intracellular retention and degradation of its individual subunits. In terms of processing, N-glycosylated. Post-translationally, ENaC is activated through the proteolytic maturation of its subunits. Furin cleaves the SCNN1A subunit, which results in a stepwise increase in the open probability of the channel due to the release of an inhibitory tract. BPIFA1, which is recruited by the SCNN1B subunit, prevents the proteolytic activation of ENaC.

It is found in the apical cell membrane. It localises to the cell projection. The protein localises to the cilium. Its subcellular location is the cytoplasmic granule. The protein resides in the cytoplasm. It is found in the cytoplasmic vesicle. It localises to the secretory vesicle. The protein localises to the acrosome. Its subcellular location is the flagellum. It carries out the reaction Na(+)(in) = Na(+)(out). Its activity is regulated as follows. Originally identified and characterized by its inhibition by the diuretic drug amiloride. This is one of the three pore-forming subunits of the heterotrimeric epithelial sodium channel (ENaC), a critical regulator of sodium balance and fluid homeostasis. ENaC operates in epithelial tissues, where it mediates the electrodiffusion of sodium ions from extracellular fluid through the apical membrane of cells, with water following osmotically. It plays a key role in maintaining sodium homeostasis through electrogenic sodium reabsorption in the kidneys. Additionally, ENaC is essential for airway surface liquid homeostasis, which is crucial for proper mucus clearance. In Pan troglodytes (Chimpanzee), this protein is Epithelial sodium channel subunit alpha.